Here is an 810-residue protein sequence, read N- to C-terminus: ATP-dependent RNA helicase dbp4 (810 aa).

The disordered stretch occupies residues 1 to 28 (MAPAAGPRTGKHAKPPRSKTLKRKRGQD). The span at 9-25 (TGKHAKPPRSKTLKRKR) shows a compositional bias: basic residues. Residues 47 to 75 (KSFSDLPLSEPTASGLASSHYKTLTDIQS) carry the Q motif motif. Residues 78–252 (ISHALKGRDV…RLSLQDPEYV (175 aa)) form the Helicase ATP-binding domain. 91–98 (AKTGSGKT) contributes to the ATP binding site. The short motif at 200 to 203 (DEAD) is the DEAD box element. Residues 278 to 437 (KLDILWSFIR…SIKDQLQNMC (160 aa)) form the Helicase C-terminal domain. Disordered regions lie at residues 494–542 (GDDT…DRMF), 590–615 (AGDKDLGSSSDEDDESEKGDKKDVKV), and 690–810 (ERTR…GLLG). Residues 522-542 (GEKKSKKKEEPQVRTKYDRMF) are compositionally biased toward basic and acidic residues. Over residues 690 to 704 (ERTRMADMEDKEIAK) the composition is skewed to basic and acidic residues. Over residues 705-714 (QKRREKKEKR) the composition is skewed to basic residues. Over residues 764–786 (KFTEANDREEAEPWYKKSKKPSD) the composition is skewed to basic and acidic residues.

The protein belongs to the DEAD box helicase family. DDX10/DBP4 subfamily. In terms of assembly, interacts with the U3 and U14 snoRNAs. Associates with pre-ribosomal complexes.

Its subcellular location is the nucleus. It localises to the nucleolus. It catalyses the reaction ATP + H2O = ADP + phosphate + H(+). Its function is as follows. ATP-dependent RNA helicase required for ribosome biogenesis. Involved in the release of U14 snoRNA in pre-ribosomal complexes. Required for pre-rRNA cleavage at site A2. This chain is ATP-dependent RNA helicase dbp4 (dbp4), found in Neosartorya fischeri (strain ATCC 1020 / DSM 3700 / CBS 544.65 / FGSC A1164 / JCM 1740 / NRRL 181 / WB 181) (Aspergillus fischerianus).